Reading from the N-terminus, the 396-residue chain is 3-amino-4-hydroxybenzoate 2-monooxygenase PtnB3 (396 aa).

FAD-binding positions include Ala-19, 38–39 (EQ), and Arg-112. The active-site Proton acceptor is Tyr-217. Asp-295 contributes to the FAD binding site.

It belongs to the 6-hydroxynicotinate 3-monooxygenase family. Requires FAD as cofactor.

The catalysed reaction is 3-amino-4-hydroxybenzoate + NADPH + O2 + H(+) = 3-amino-2,4-dihydroxybenzoate + NADP(+) + H2O. It participates in antibiotic biosynthesis. Its function is as follows. Part of a gene cluster involved in the biosynthesis of thioplatencin (ThioPTN) and platencin (PTN), potent and selective inhibitors of bacterial and mammalian fatty acid synthases. Catalyzes the hydroxylation of 3-amino-4-hydroxybenzoate (3,4-AHBA) to 3-amino-2,4-dihydroxybenzoate (3,2,4-ADHBA). This chain is 3-amino-4-hydroxybenzoate 2-monooxygenase PtnB3, found in Streptomyces platensis.